The following is a 284-amino-acid chain: Ribosomal RNA small subunit methyltransferase A (284 aa).

S-adenosyl-L-methionine contacts are provided by Asn-26, Leu-28, Gly-53, Glu-74, Asp-97, and Asn-127.

This sequence belongs to the class I-like SAM-binding methyltransferase superfamily. rRNA adenine N(6)-methyltransferase family. RsmA subfamily.

It localises to the cytoplasm. It carries out the reaction adenosine(1518)/adenosine(1519) in 16S rRNA + 4 S-adenosyl-L-methionine = N(6)-dimethyladenosine(1518)/N(6)-dimethyladenosine(1519) in 16S rRNA + 4 S-adenosyl-L-homocysteine + 4 H(+). In terms of biological role, specifically dimethylates two adjacent adenosines (A1518 and A1519) in the loop of a conserved hairpin near the 3'-end of 16S rRNA in the 30S particle. May play a critical role in biogenesis of 30S subunits. The polypeptide is Ribosomal RNA small subunit methyltransferase A (Anaeromyxobacter dehalogenans (strain 2CP-C)).